A 539-amino-acid chain; its full sequence is T-complex protein 1 subunit delta (539 aa).

The disordered stretch occupies residues 1 to 29; that stretch reads MPENVAPRSGATAGAAGGRGKGAYQDRDK. The residue at position 19 (arginine 19) is an Omega-N-methylarginine. The residue at position 21 (lysine 21) is an N6-acetyllysine. Serine 36 carries the post-translational modification Phosphoserine. An ADP-binding site is contributed by glycine 53. Glycine 53 serves as a coordination point for ATP. Aspartate 104 lines the Mg(2+) pocket. 7 residues coordinate ADP: glycine 105, threonine 106, threonine 107, serine 108, asparagine 172, serine 173, and lysine 174. 2 residues coordinate ATP: glycine 105 and threonine 106. Lysine 174 is an ATP binding site. 2 positions are modified to phosphoserine: serine 184 and serine 202. Residues lysine 288, lysine 302, lysine 319, and lysine 326 each carry the N6-acetyllysine modification. An ADP-binding site is contributed by glycine 425. Serine 444 carries the phosphoserine modification. Residue glutamine 510 participates in ADP binding.

Belongs to the TCP-1 chaperonin family. Component of the chaperonin-containing T-complex (TRiC), a hexadecamer composed of two identical back-to-back stacked rings enclosing a protein folding chamber. Each ring is made up of eight different subunits: TCP1/CCT1, CCT2, CCT3, CCT4, CCT5, CCT6A/CCT6, CCT7, CCT8. Interacts with PACRG. Interacts with DNAAF4. Interacts with DLEC1.

Its subcellular location is the cytoplasm. It localises to the melanosome. The protein localises to the cytoskeleton. It is found in the microtubule organizing center. The protein resides in the centrosome. Its subcellular location is the cilium basal body. It carries out the reaction ATP + H2O = ADP + phosphate + H(+). Component of the chaperonin-containing T-complex (TRiC), a molecular chaperone complex that assists the folding of actin, tubulin and other proteins upon ATP hydrolysis. The TRiC complex mediates the folding of WRAP53/TCAB1, thereby regulating telomere maintenance. As part of the TRiC complex may play a role in the assembly of BBSome, a complex involved in ciliogenesis regulating transports vesicles to the cilia. The protein is T-complex protein 1 subunit delta (CCT4) of Homo sapiens (Human).